The primary structure comprises 497 residues: Signal recognition particle subunit SRP54 1 (497 aa).

Residues 1 to 295 (MVLAQLGGSI…DVKPFVSRLL (295 aa)) form a G-domain region. Residues 108-115 (GLQGSGKT), 190-194 (DTSGR), and 248-251 (TKLD) contribute to the GTP site. Residues 296–497 (GMGDLSGLMD…MLGGMGLGGD (202 aa)) are M-domain.

The protein belongs to the GTP-binding SRP family. SRP54 subfamily. In terms of assembly, component of a signal recognition particle (SRP) complex that consists of a 7SL RNA molecule of 300 nucleotides and six protein subunits: SRP72, SRP68, SRP54, SRP19, SRP14 and SRP9.

It localises to the cytoplasm. Its subcellular location is the endoplasmic reticulum. The enzyme catalyses GTP + H2O = GDP + phosphate + H(+). In terms of biological role, component of the signal recognition particle (SRP) complex, a ribonucleoprotein complex that mediates the cotranslational targeting of secretory and membrane proteins to the endoplasmic reticulum (ER). As part of the SRP complex, associates with the SRP receptor (SR) component SRPRA to target secretory proteins to the endoplasmic reticulum membrane. Binds to the signal sequence of presecretory proteins when they emerge from the ribosomes. Displays basal GTPase activity, and stimulates reciprocal GTPase activation of the SR subunit SRPRA. Forms a guanosine 5'-triphosphate (GTP)-dependent complex with the SR subunit SRPRA. SR compaction and GTPase mediated rearrangement of SR drive SRP-mediated cotranslational protein translocation into the ER. Requires the presence of SRP9/SRP14 and/or SRP19 to stably interact with RNA. The sequence is that of Signal recognition particle subunit SRP54 1 (SRP54-1) from Hordeum vulgare (Barley).